Here is a 125-residue protein sequence, read N- to C-terminus: ATP synthase epsilon chain (125 aa).

The protein belongs to the ATPase epsilon chain family. In terms of assembly, F-type ATPases have 2 components, CF(1) - the catalytic core - and CF(0) - the membrane proton channel. CF(1) has five subunits: alpha(3), beta(3), gamma(1), delta(1), epsilon(1). CF(0) has three main subunits: a, b and c.

It is found in the cell inner membrane. Produces ATP from ADP in the presence of a proton gradient across the membrane. This Aliarcobacter butzleri (strain RM4018) (Arcobacter butzleri) protein is ATP synthase epsilon chain.